The following is a 414-amino-acid chain: Arrestin domain-containing protein 3 (414 aa).

2 short sequence motifs (PPxY motif) span residues 346-349 (PPSY) and 391-394 (PPLY). Residues 393 to 414 (LYSEIDPNPDQPADDRPSCPSR) form a disordered region. Positions 405–414 (ADDRPSCPSR) are enriched in basic and acidic residues.

The protein belongs to the arrestin family. As to quaternary structure, interacts (via PPxY motifs) with NEDD4 (via WW domains). Interacts with ADRB2. Interacts with ADRB3. Interacts with HGS (via PPxY motifs). Does not bind TXN (thioredoxin). Interacts with ITCH.

It is found in the cytoplasm. The protein resides in the cell membrane. It localises to the lysosome. The protein localises to the endosome. Its subcellular location is the early endosome. Its function is as follows. Adapter protein that plays a role in regulating cell-surface expression of adrenergic receptors and probably also other G protein-coupled receptors. Plays a role in NEDD4-mediated ubiquitination and endocytosis af activated ADRB2 and subsequent ADRB2 degradation. May recruit NEDD4 to ADRB2. Alternatively, may function as adapter protein that does not play a major role in recruiting NEDD4 to ADRB2, but rather plays a role in a targeting ADRB2 to endosomes. This is Arrestin domain-containing protein 3 (ARRDC3) from Bos taurus (Bovine).